A 66-amino-acid polypeptide reads, in one-letter code: Large ribosomal subunit protein uL29 (66 aa).

It belongs to the universal ribosomal protein uL29 family.

The protein is Large ribosomal subunit protein uL29 of Agrobacterium fabrum (strain C58 / ATCC 33970) (Agrobacterium tumefaciens (strain C58)).